A 233-amino-acid polypeptide reads, in one-letter code: Large ribosomal subunit protein uL1 (233 aa).

The protein belongs to the universal ribosomal protein uL1 family. Part of the 50S ribosomal subunit.

Binds directly to 23S rRNA. The L1 stalk is quite mobile in the ribosome, and is involved in E site tRNA release. Functionally, protein L1 is also a translational repressor protein, it controls the translation of the L11 operon by binding to its mRNA. This Photobacterium profundum (strain SS9) protein is Large ribosomal subunit protein uL1.